A 142-amino-acid chain; its full sequence is Putative tyrosine phosphatase 123R (142 aa).

The Tyrosine-protein phosphatase domain occupies 2 to 137 (EPTKIVENLY…LAQFERWLNS (136 aa)). Cysteine 81 (phosphocysteine intermediate) is an active-site residue.

This sequence belongs to the protein-tyrosine phosphatase family.

This is Putative tyrosine phosphatase 123R from Invertebrate iridescent virus 6 (IIV-6).